The primary structure comprises 386 residues: MAVPPSAPQPRASFHLRRHTPCPQCSWGMEEKAAASASCREPPGPPRAAAVAYFGISVDPDDILPGALRLIQELRPHWKPEQVRTKRFTDGITNKLVACYVEEDMQDCVLVRVYGERTELLVDRENEVRNFQLLRAHSCAPKLYCTFQNGLCYEYMQGVALEPEHIREPRLFRLIALEMAKIHTIHANGSLPKPILWHKMHNYFTLVKNEINPSLSADVPKVEVLERELAWLKEHLSQLESPVVFCHNDLLCKNIIYDSIKGHVRFIDYEYAGYNYQAFDIGNHFNEFAGVNEVDYCLYPARETQLQWLHYYLQAQKGMAVTPREVQRLYVQVNKFALASHFFWALWALIQNQYSTIDFDFLRYAVIRFNQYFKVKPQASALEMPK.

This sequence belongs to the choline/ethanolamine kinase family. In terms of tissue distribution, expressed in kidney, liver, ovary, testis and prostate.

The enzyme catalyses ethanolamine + ATP = phosphoethanolamine + ADP + H(+). The protein operates within phospholipid metabolism; phosphatidylethanolamine biosynthesis; phosphatidylethanolamine from ethanolamine: step 1/3. Functionally, highly specific for ethanolamine phosphorylation. Does not have choline kinase activity. The chain is Ethanolamine kinase 2 (ETNK2) from Homo sapiens (Human).